The sequence spans 426 residues: Glutamyl-tRNA reductase (426 aa).

Substrate is bound by residues 52–55, serine 110, 115–117, and glutamine 121; these read TCNR and EYE. Cysteine 53 (nucleophile) is an active-site residue. 190–195 contributes to the NADP(+) binding site; sequence GAGEMA.

This sequence belongs to the glutamyl-tRNA reductase family. In terms of assembly, homodimer.

It catalyses the reaction (S)-4-amino-5-oxopentanoate + tRNA(Glu) + NADP(+) = L-glutamyl-tRNA(Glu) + NADPH + H(+). It functions in the pathway porphyrin-containing compound metabolism; protoporphyrin-IX biosynthesis; 5-aminolevulinate from L-glutamyl-tRNA(Glu): step 1/2. Its function is as follows. Catalyzes the NADPH-dependent reduction of glutamyl-tRNA(Glu) to glutamate 1-semialdehyde (GSA). This chain is Glutamyl-tRNA reductase, found in Saccharolobus solfataricus (strain ATCC 35092 / DSM 1617 / JCM 11322 / P2) (Sulfolobus solfataricus).